Here is a 265-residue protein sequence, read N- to C-terminus: 5'-nucleotidase SurE (265 aa).

The a divalent metal cation site is built by aspartate 9, aspartate 10, serine 40, and asparagine 96.

This sequence belongs to the SurE nucleotidase family. A divalent metal cation serves as cofactor.

It localises to the cytoplasm. The enzyme catalyses a ribonucleoside 5'-phosphate + H2O = a ribonucleoside + phosphate. Nucleotidase that shows phosphatase activity on nucleoside 5'-monophosphates. In Methanothrix thermoacetophila (strain DSM 6194 / JCM 14653 / NBRC 101360 / PT) (Methanosaeta thermophila), this protein is 5'-nucleotidase SurE.